Here is a 307-residue protein sequence, read N- to C-terminus: Olfactory receptor 12D2 (307 aa).

The Extracellular portion of the chain corresponds to 1–23 (MLNTTSVTEFLLLGVTDIQELQP). The N-linked (GlcNAc...) asparagine glycan is linked to Asn3. A helical membrane pass occupies residues 24–44 (FLFVVFLTIYFISVTGNGAVL). The Cytoplasmic segment spans residues 45-52 (MIVISDPR). Residues 53 to 73 (LHSLMYFFLGNLSYLDICYST) traverse the membrane as a helical segment. The Extracellular portion of the chain corresponds to 74 to 97 (VTLPKMLQNFLSTHKAISFLGCIS). Cys95 and Cys187 are disulfide-bonded. A helical transmembrane segment spans residues 98–118 (QLHFFHSLGSTESMLFAVMAF). At 119–137 (DLSVAICKPLRYTVIMNPQ) the chain is on the cytoplasmic side. A helical membrane pass occupies residues 138–158 (LCTQMAITIWVIGFFHALLHS). Topologically, residues 159-195 (VMTSRLNFCGSNRIHHFLCDIKPLLKLACGNTELNQW) are extracellular. Residues 196 to 215 (LLSTVTGTIAMGPFFLTLLS) traverse the membrane as a helical segment. The Cytoplasmic portion of the chain corresponds to 216–236 (YFYIITYLFFKTRSCSMLCKA). The helical transmembrane segment at 237 to 257 (LSTCASHFMVVILFYAPVLFT) threads the bilayer. Over 258–270 (YIHPALESFMDQD) the chain is Extracellular. Residues 271-291 (RIVAIMYTVVTPVLNPLIYTL) traverse the membrane as a helical segment. The Cytoplasmic segment spans residues 292–307 (RNKEVKGALGRVIRRL).

This sequence belongs to the G-protein coupled receptor 1 family.

Its subcellular location is the cell membrane. Odorant receptor. This chain is Olfactory receptor 12D2 (OR12D2), found in Homo sapiens (Human).